Consider the following 652-residue polypeptide: Beta-glucuronidase (652 aa).

The N-terminal stretch at 1–22 (MVRGPAGAWAVLGPLLWGCGLA) is a signal peptide. N-linked (GlcNAc...) asparagine glycans are attached at residues N173 and N420. The active-site Proton donor is E451. N-linked (GlcNAc...) asparagine glycosylation is present at N631.

Belongs to the glycosyl hydrolase 2 family. In terms of assembly, homotetramer.

The protein localises to the lysosome. It carries out the reaction a beta-D-glucuronoside + H2O = D-glucuronate + an alcohol. Its activity is regulated as follows. Inhibited by L-aspartic acid. Functionally, plays an important role in the degradation of dermatan and keratan sulfates. The chain is Beta-glucuronidase (GUSB) from Sus scrofa (Pig).